Reading from the N-terminus, the 99-residue chain is Acylphosphatase (99 aa).

The Acylphosphatase-like domain maps to I5–P97. Catalysis depends on residues R20 and N38.

This sequence belongs to the acylphosphatase family.

It catalyses the reaction an acyl phosphate + H2O = a carboxylate + phosphate + H(+). This Bradyrhizobium diazoefficiens (strain JCM 10833 / BCRC 13528 / IAM 13628 / NBRC 14792 / USDA 110) protein is Acylphosphatase (acyP).